A 186-amino-acid polypeptide reads, in one-letter code: Allergen Fel d 4 (186 aa).

The signal sequence occupies residues 1 to 15 (MKLLLLCLGLILVCA). Residues N51 and N66 are each glycosylated (N-linked (GlcNAc...) asparagine). An intrachain disulfide couples C81 to C171.

The protein belongs to the calycin superfamily. Lipocalin family. Abundant in urine (at protein level).

The protein localises to the secreted. Functionally, may be a pheromone carrier. Acts as a kairomone, detected by the prey vomeronasal organ and inducing fear reactions in mice. The sequence is that of Allergen Fel d 4 from Felis catus (Cat).